We begin with the raw amino-acid sequence, 500 residues long: Allene oxide synthase 3 (500 aa).

A disordered region spans residues M1–G26. Substrate contacts are provided by residues F297–N298, K304, and P365–F368. Position 452 (C452) interacts with heme.

Belongs to the cytochrome P450 family. Requires heme as cofactor. Not expressed in dark-grown seedlings.

The enzyme catalyses (13S)-hydroperoxy-(9Z,11E,15Z)-octadecatrienoate = (9Z,13S,15Z)-12,13-epoxyoctadeca-9,11,15-trienoate + H2O. The protein operates within lipid metabolism; oxylipin biosynthesis. In terms of biological role, involved in the biosynthesis of jasmonic acid, a growth regulator that is implicated also as a signaling molecule in plant defense. Converts 13-hydroperoxylinolenic acid to 12,13-epoxylinolenic acid. This is Allene oxide synthase 3 (CYP74A3) from Oryza sativa subsp. japonica (Rice).